A 1394-amino-acid polypeptide reads, in one-letter code: DNA-directed RNA polymerase subunit beta' (1394 aa).

Zn(2+)-binding residues include C70, C72, C85, and C88. Mg(2+)-binding residues include D470, D472, and D474. Zn(2+) is bound by residues C815, C889, C896, and C899.

The protein belongs to the RNA polymerase beta' chain family. As to quaternary structure, the RNAP catalytic core consists of 2 alpha, 1 beta, 1 beta' and 1 omega subunit. When a sigma factor is associated with the core the holoenzyme is formed, which can initiate transcription. It depends on Mg(2+) as a cofactor. The cofactor is Zn(2+).

The catalysed reaction is RNA(n) + a ribonucleoside 5'-triphosphate = RNA(n+1) + diphosphate. Functionally, DNA-dependent RNA polymerase catalyzes the transcription of DNA into RNA using the four ribonucleoside triphosphates as substrates. In Anaeromyxobacter sp. (strain K), this protein is DNA-directed RNA polymerase subunit beta'.